Here is a 201-residue protein sequence, read N- to C-terminus: Zinc finger protein 239 (201 aa).

C2H2-type zinc fingers lie at residues 6-28, 34-56, 62-84, 90-112, 118-140, 146-168, and 174-196; these read YKCD…HSVH, FKCD…KRVH, YACE…QRVH, YKCG…RCTH, YQCY…LRVH, YHCG…QRVH, and YECS…QRVH.

Belongs to the krueppel C2H2-type zinc-finger protein family. As to expression, preferentially expressed in transformed mouse cells.

The protein localises to the nucleus. In terms of biological role, may be involved in transcriptional regulation. This Mus musculus (Mouse) protein is Zinc finger protein 239 (Znf239).